A 112-amino-acid chain; its full sequence is Protein Tat (112 aa).

Positions 1–24 are interaction with human CREBBP; sequence MDPVDPEMPPWHHPGSKPQTPCNN. A transactivation region spans residues 1–48; sequence MDPVDPEMPPWHHPGSKPQTPCNNCYCKRCCYHCYVCFTKKGLGISHG. Residues Cys22, Cys25, and Cys27 each contribute to the Zn(2+) site. Positions 22-37 are cysteine-rich; sequence CNNCYCKRCCYHCYVC. Position 28 is an N6-acetyllysine; by host PCAF (Lys28). Cys30, His33, Cys34, and Cys37 together coordinate Zn(2+). Residues 38–48 are core; sequence FTKKGLGISHG. Positions 45–112 are disordered; the sequence is ISHGRKKRRR…CNSCTRISGQ (68 aa). A Nuclear localization signal, RNA-binding (TAR), and protein transduction motif is present at residues 49 to 56; the sequence is RKKRRRPA. Residues 49 to 82 form an interaction with the host capping enzyme RNGTT region; that stretch reads RKKRRRPAAAASYPDNKDPVPEQHTGRKQKRQEE. Lys50 and Lys51 each carry N6-acetyllysine; by host EP300 and GCN5L2. Arg52 and Arg53 each carry asymmetric dimethylarginine; by host PRMT6. Positions 63–91 are enriched in basic and acidic residues; that stretch reads DNKDPVPEQHTGRKQKRQEEQEKKVEKET. Residues 93-112 are compositionally biased toward polar residues; sequence PSGQPCHQDSCNSCTRISGQ.

It belongs to the lentiviruses Tat family. Interacts with host CCNT1. Associates with the P-TEFb complex composed at least of Tat, P-TEFb (CDK9 and CCNT1), TAR RNA, RNA Pol II. Recruits the HATs CREBBP, TAF1/TFIID, EP300, PCAF and GCN5L2. Interacts with host KAT5/Tip60; this interaction targets the latter to degradation. Interacts with the host deacetylase SIRT1. Interacts with host capping enzyme RNGTT; this interaction stimulates RNGTT. Binds to host KDR, and to the host integrins ITGAV/ITGB3 and ITGA5/ITGB1. Interacts with host KPNB1/importin beta-1 without previous binding to KPNA1/importin alpha-1. Interacts with EIF2AK2. Interacts with host nucleosome assembly protein NAP1L1; this interaction may be required for the transport of Tat within the nucleus, since the two proteins interact at the nuclear rim. Interacts with host C1QBP/SF2P32; this interaction involves lysine-acetylated Tat. Interacts with the host chemokine receptors CCR2, CCR3 and CXCR4. Interacts with host DPP4/CD26; this interaction may trigger an anti-proliferative effect. Interacts with host LDLR. Interacts with the host extracellular matrix metalloproteinase MMP1. Interacts with host PRMT6; this interaction mediates Tat's methylation. Interacts with, and is ubiquitinated by MDM2/Hdm2. Interacts with host PSMC3 and HTATIP2. Interacts with STAB1; this interaction may overcome SATB1-mediated repression of IL2 and IL2RA (interleukin) in T cells by binding to the same domain than HDAC1. Interacts (when acetylated) with human CDK13, thereby increasing HIV-1 mRNA splicing and promoting the production of the doubly spliced HIV-1 protein Nef. Interacts with host TBP; this interaction modulates the activity of transcriptional pre-initiation complex. Interacts with host RELA. Interacts with host PLSCR1; this interaction negatively regulates Tat transactivation activity by altering its subcellular distribution. Post-translationally, asymmetrical arginine methylation by host PRMT6 seems to diminish the transactivation capacity of Tat and affects the interaction with host CCNT1. In terms of processing, acetylation by EP300, CREBBP, GCN5L2/GCN5 and PCAF regulates the transactivation activity of Tat. EP300-mediated acetylation of Lys-50 promotes dissociation of Tat from the TAR RNA through the competitive binding to PCAF's bromodomain. In addition, the non-acetylated Tat's N-terminus can also interact with PCAF. PCAF-mediated acetylation of Lys-28 enhances Tat's binding to CCNT1. Lys-50 is deacetylated by SIRT1. Polyubiquitination by host MDM2 does not target Tat to degradation, but activates its transactivation function and fosters interaction with CCNT1 and TAR RNA. Post-translationally, phosphorylated by EIF2AK2 on serine and threonine residues adjacent to the basic region important for TAR RNA binding and function. Phosphorylation of Tat by EIF2AK2 is dependent on the prior activation of EIF2AK2 by dsRNA.

The protein localises to the host nucleus. It is found in the host nucleolus. The protein resides in the host cytoplasm. It localises to the secreted. Functionally, transcriptional activator that increases RNA Pol II processivity, thereby increasing the level of full-length viral transcripts. Recognizes a hairpin structure at the 5'-LTR of the nascent viral mRNAs referred to as the transactivation responsive RNA element (TAR) and recruits the cyclin T1-CDK9 complex (P-TEFb complex) that will in turn hyperphosphorylate the RNA polymerase II to allow efficient elongation. The CDK9 component of P-TEFb and other Tat-activated kinases hyperphosphorylate the C-terminus of RNA Pol II that becomes stabilized and much more processive. Other factors such as HTATSF1/Tat-SF1, SUPT5H/SPT5, and HTATIP2 are also important for Tat's function. Besides its effect on RNA Pol II processivity, Tat induces chromatin remodeling of proviral genes by recruiting the histone acetyltransferases (HATs) CREBBP, EP300 and PCAF to the chromatin. This also contributes to the increase in proviral transcription rate, especially when the provirus integrates in transcriptionally silent region of the host genome. To ensure maximal activation of the LTR, Tat mediates nuclear translocation of NF-kappa-B by interacting with host RELA. Through its interaction with host TBP, Tat may also modulate transcription initiation. Tat can reactivate a latently infected cell by penetrating in it and transactivating its LTR promoter. In the cytoplasm, Tat is thought to act as a translational activator of HIV-1 mRNAs. Its function is as follows. Extracellular circulating Tat can be endocytosed by surrounding uninfected cells via the binding to several surface receptors such as CD26, CXCR4, heparan sulfate proteoglycans (HSPG) or LDLR. Neurons are rarely infected, but they internalize Tat via their LDLR. Through its interaction with nuclear HATs, Tat is potentially able to control the acetylation-dependent cellular gene expression. Modulates the expression of many cellular genes involved in cell survival, proliferation or in coding for cytokines or cytokine receptors. Tat plays a role in T-cell and neurons apoptosis. Tat induced neurotoxicity and apoptosis probably contribute to neuroAIDS. Circulating Tat also acts as a chemokine-like and/or growth factor-like molecule that binds to specific receptors on the surface of the cells, affecting many cellular pathways. In the vascular system, Tat binds to ITGAV/ITGB3 and ITGA5/ITGB1 integrins dimers at the surface of endothelial cells and competes with bFGF for heparin-binding sites, leading to an excess of soluble bFGF. In Homo sapiens (Human), this protein is Protein Tat.